Consider the following 356-residue polypeptide: MTIQANVPTGDETSDEASRQTSNEASSEILETARQQVLENGVGLTQAQLEEFLRLPDEALPAALQLAHEVRLKHCGEDVEVEGIISIKTGGCPEDCHFCSQSGLFDSPVRGVWLDIPELVKAAKETAATGATEFCIVAAVRCPDIKLMNQIKFAIDRINEAVDINIACSLGMLTQRQVDQLAEWGVHRYNHNLETARSYFPEVVTTHSYEERLETCNMVKAAGMELCCGALIGMGETLEQRAELAAQLAALEPHEVPLNFLNPRPGTPLENQGIMDGKDALRAIAAFRLAMPRTVLRYAGGRELTLGDLGTREGLLGGINAVIVGNYLTTLGRPATADLSLLVELNMPIKELQKTL.

Residues 1 to 28 (MTIQANVPTGDETSDEASRQTSNEASSE) are disordered. The region spanning 77-302 (EDVEVEGIIS…RTVLRYAGGR (226 aa)) is the Radical SAM core domain. Cys92, Cys96, and Cys99 together coordinate [4Fe-4S] cluster. The [2Fe-2S] cluster site is built by Cys135, Cys168, Cys227, and Arg297.

This sequence belongs to the radical SAM superfamily. Biotin synthase family. As to quaternary structure, homodimer. Requires [4Fe-4S] cluster as cofactor. The cofactor is [2Fe-2S] cluster.

It catalyses the reaction (4R,5S)-dethiobiotin + (sulfur carrier)-SH + 2 reduced [2Fe-2S]-[ferredoxin] + 2 S-adenosyl-L-methionine = (sulfur carrier)-H + biotin + 2 5'-deoxyadenosine + 2 L-methionine + 2 oxidized [2Fe-2S]-[ferredoxin]. Its pathway is cofactor biosynthesis; biotin biosynthesis; biotin from 7,8-diaminononanoate: step 2/2. Catalyzes the conversion of dethiobiotin (DTB) to biotin by the insertion of a sulfur atom into dethiobiotin via a radical-based mechanism. This Arthrobacter sp. (strain FB24) protein is Biotin synthase.